The following is a 451-amino-acid chain: Probable D-serine dehydratase (451 aa).

The residue at position 119 (lysine 119) is an N6-(pyridoxal phosphate)lysine.

It belongs to the serine/threonine dehydratase family. DsdA subfamily. It depends on pyridoxal 5'-phosphate as a cofactor.

The enzyme catalyses D-serine = pyruvate + NH4(+). This Acidovorax sp. (strain JS42) protein is Probable D-serine dehydratase.